Reading from the N-terminus, the 103-residue chain is Large ribosomal subunit protein bL21 (103 aa).

This sequence belongs to the bacterial ribosomal protein bL21 family. Part of the 50S ribosomal subunit. Contacts protein L20.

In terms of biological role, this protein binds to 23S rRNA in the presence of protein L20. This Haemophilus influenzae (strain 86-028NP) protein is Large ribosomal subunit protein bL21.